The following is a 521-amino-acid chain: GMP synthase [glutamine-hydrolyzing] (521 aa).

In terms of domain architecture, Glutamine amidotransferase type-1 spans 8–203; sequence KILILDFGAQ…VVDVCGCQTL (196 aa). Catalysis depends on Cys-85, which acts as the Nucleophile. Catalysis depends on residues His-177 and Glu-179. The GMPS ATP-PPase domain occupies 204 to 396; the sequence is WTAANIIDDQ…LGLPRTMVYR (193 aa). 231–237 is an ATP binding site; sequence SGGVDSS.

As to quaternary structure, homodimer.

The catalysed reaction is XMP + L-glutamine + ATP + H2O = GMP + L-glutamate + AMP + diphosphate + 2 H(+). It participates in purine metabolism; GMP biosynthesis; GMP from XMP (L-Gln route): step 1/1. Catalyzes the synthesis of GMP from XMP. The sequence is that of GMP synthase [glutamine-hydrolyzing] from Stenotrophomonas maltophilia (strain K279a).